The chain runs to 356 residues: MEERDRTGRTGQPQHRINQPSTARERANSVDAYGFQRSDDFDYETHEQLMSEYLAVLTRRSIRWAKLLQGRRRVDRNLKVKRYVRKGVPNEHRPLVWMVCSGAQEQMDRNPGYYQSLLDTHHEPKLEESIRTDLHRTFPDNIYFRKSAEPCLQQALYNVLVAYGHHNKAVGYCQGMNFIAGYLILVSKDEETSFWLMEALLSRILPDYYTPAMLGLKTDQEVLGELVRLKAPAVWKLMQDQGVMWTLVVSRWFICLFIDVLPVETVLRIWDCLFYEGSKILFRVALTLIRHHQQEIAEAQNLPDVCERFKRITRGAFVEDCHTFMQKIFQEPGSLSMATVSKLRESCRARIIADES.

A disordered region spans residues 1–29 (MEERDRTGRTGQPQHRINQPSTARERANS). Positions 9-22 (RTGQPQHRINQPST) are enriched in polar residues. Residues 87-277 (GVPNEHRPLV…RIWDCLFYEG (191 aa)) enclose the Rab-GAP TBC domain.

Functionally, may act as a GTPase-activating protein for Rab family protein(s). This chain is Growth hormone-regulated TBC protein 1-A (grtp1a), found in Danio rerio (Zebrafish).